A 144-amino-acid polypeptide reads, in one-letter code: Large ribosomal subunit protein uL15 (144 aa).

A disordered region spans residues 1–53 (MFLNTIKPGEGAKHAKRRVGRGIGSGLGKTAGRGHKGQKSRSGGFHKVGFEGG). Positions 21–31 (RGIGSGLGKTA) are enriched in gly residues.

Belongs to the universal ribosomal protein uL15 family. As to quaternary structure, part of the 50S ribosomal subunit.

Its function is as follows. Binds to the 23S rRNA. The sequence is that of Large ribosomal subunit protein uL15 from Laribacter hongkongensis (strain HLHK9).